A 379-amino-acid polypeptide reads, in one-letter code: UDP-4-amino-4-deoxy-L-arabinose--oxoglutarate aminotransferase (379 aa).

K182 is modified (N6-(pyridoxal phosphate)lysine).

This sequence belongs to the DegT/DnrJ/EryC1 family. ArnB subfamily. In terms of assembly, homodimer. The cofactor is pyridoxal 5'-phosphate.

The catalysed reaction is UDP-4-amino-4-deoxy-beta-L-arabinose + 2-oxoglutarate = UDP-beta-L-threo-pentopyranos-4-ulose + L-glutamate. The protein operates within nucleotide-sugar biosynthesis; UDP-4-deoxy-4-formamido-beta-L-arabinose biosynthesis; UDP-4-deoxy-4-formamido-beta-L-arabinose from UDP-alpha-D-glucuronate: step 2/3. It participates in bacterial outer membrane biogenesis; lipopolysaccharide biosynthesis. In terms of biological role, catalyzes the conversion of UDP-4-keto-arabinose (UDP-Ara4O) to UDP-4-amino-4-deoxy-L-arabinose (UDP-L-Ara4N). The modified arabinose is attached to lipid A and is required for resistance to polymyxin and cationic antimicrobial peptides. This Klebsiella pneumoniae subsp. pneumoniae (strain ATCC 700721 / MGH 78578) protein is UDP-4-amino-4-deoxy-L-arabinose--oxoglutarate aminotransferase.